A 397-amino-acid chain; its full sequence is Arginine biosynthesis bifunctional protein ArgJ (397 aa).

Positions 147, 173, 184, 270, 392, and 397 each coordinate substrate. The active-site Nucleophile is the threonine 184.

It belongs to the ArgJ family. In terms of assembly, heterotetramer of two alpha and two beta chains.

Its subcellular location is the cytoplasm. The enzyme catalyses N(2)-acetyl-L-ornithine + L-glutamate = N-acetyl-L-glutamate + L-ornithine. It catalyses the reaction L-glutamate + acetyl-CoA = N-acetyl-L-glutamate + CoA + H(+). Its pathway is amino-acid biosynthesis; L-arginine biosynthesis; L-ornithine and N-acetyl-L-glutamate from L-glutamate and N(2)-acetyl-L-ornithine (cyclic): step 1/1. It functions in the pathway amino-acid biosynthesis; L-arginine biosynthesis; N(2)-acetyl-L-ornithine from L-glutamate: step 1/4. Catalyzes two activities which are involved in the cyclic version of arginine biosynthesis: the synthesis of N-acetylglutamate from glutamate and acetyl-CoA as the acetyl donor, and of ornithine by transacetylation between N(2)-acetylornithine and glutamate. This is Arginine biosynthesis bifunctional protein ArgJ from Streptococcus thermophilus (strain CNRZ 1066).